Consider the following 211-residue polypeptide: Nucleoside triphosphate pyrophosphatase (211 aa).

Asp75 acts as the Proton acceptor in catalysis.

This sequence belongs to the Maf family. The cofactor is a divalent metal cation.

The protein localises to the cytoplasm. It catalyses the reaction a ribonucleoside 5'-triphosphate + H2O = a ribonucleoside 5'-phosphate + diphosphate + H(+). The enzyme catalyses a 2'-deoxyribonucleoside 5'-triphosphate + H2O = a 2'-deoxyribonucleoside 5'-phosphate + diphosphate + H(+). Functionally, nucleoside triphosphate pyrophosphatase. May have a dual role in cell division arrest and in preventing the incorporation of modified nucleotides into cellular nucleic acids. In Prochlorococcus marinus (strain NATL2A), this protein is Nucleoside triphosphate pyrophosphatase.